We begin with the raw amino-acid sequence, 91 residues long: Probable Fe(2+)-trafficking protein (91 aa).

This sequence belongs to the Fe(2+)-trafficking protein family. Monomer.

Its function is as follows. Could be a mediator in iron transactions between iron acquisition and iron-requiring processes, such as synthesis and/or repair of Fe-S clusters in biosynthetic enzymes. The chain is Probable Fe(2+)-trafficking protein from Salmonella agona (strain SL483).